The primary structure comprises 524 residues: Translation initiation factor eIF2B subunit delta (524 aa).

The tract at residues 1-174 is disordered; the sequence is MAAVAVAVRE…RQQVPTRKDY (174 aa). Position 2 is an N-acetylalanine (A2). 2 stretches are compositionally biased toward basic and acidic residues: residues 8 to 20 and 31 to 40; these read VREE…KTEL and LTQEEKLQLR. S12 is modified (phosphoserine). Residues 41 to 51 show a composition bias toward basic residues; the sequence is KEKKQQKKKRK. Phosphothreonine is present on T86. Composition is skewed to basic and acidic residues over residues 96-121 and 161-174; these read SKAE…RKGE and RKPD…RKDY. The interval 171 to 180 is may bind the chemical integrated stress response (ISR) inhibitor ISRIB; the sequence is RKDYGSKVSL.

Belongs to the eIF-2B alpha/beta/delta subunits family. As to quaternary structure, component of the translation initiation factor 2B (eIF2B) complex which is a heterodecamer of two sets of five different subunits: alpha, beta, gamma, delta and epsilon. Subunits alpha, beta and delta comprise a regulatory subcomplex and subunits epsilon and gamma comprise a catalytic subcomplex. Within the complex, the hexameric regulatory complex resides at the center, with the two heterodimeric catalytic subcomplexes bound on opposite sides.

The protein resides in the cytoplasm. Its subcellular location is the cytosol. Its activity is regulated as follows. Activated by the chemical integrated stress response (ISR) inhibitor ISRIB which stimulates guanine nucleotide exchange factor activity for both phosphorylated and unphosphorylated eIF2. Its function is as follows. Acts as a component of the translation initiation factor 2B (eIF2B) complex, which catalyzes the exchange of GDP for GTP on eukaryotic initiation factor 2 (eIF2) gamma subunit. Its guanine nucleotide exchange factor activity is repressed when bound to eIF2 complex phosphorylated on the alpha subunit, thereby limiting the amount of methionyl-initiator methionine tRNA available to the ribosome and consequently global translation is repressed. The chain is Translation initiation factor eIF2B subunit delta (Eif2b4) from Rattus norvegicus (Rat).